We begin with the raw amino-acid sequence, 405 residues long: 4-hydroxy-3-methylbut-2-enyl diphosphate reductase (405 aa).

[4Fe-4S] cluster is bound at residue Cys66. Position 96 (His96) interacts with (2E)-4-hydroxy-3-methylbut-2-enyl diphosphate. His96 serves as a coordination point for dimethylallyl diphosphate. An isopentenyl diphosphate-binding site is contributed by His96. Residue Cys158 participates in [4Fe-4S] cluster binding. His186 serves as a coordination point for (2E)-4-hydroxy-3-methylbut-2-enyl diphosphate. His186 is a dimethylallyl diphosphate binding site. His186 contributes to the isopentenyl diphosphate binding site. Catalysis depends on Glu188, which acts as the Proton donor. Position 251 (Thr251) interacts with (2E)-4-hydroxy-3-methylbut-2-enyl diphosphate. Position 289 (Cys289) interacts with [4Fe-4S] cluster. Residues Ser318, Ser319, Asn320, and Ser380 each contribute to the (2E)-4-hydroxy-3-methylbut-2-enyl diphosphate site. The dimethylallyl diphosphate site is built by Ser318, Ser319, Asn320, and Ser380. Residues Ser318, Ser319, Asn320, and Ser380 each coordinate isopentenyl diphosphate.

Belongs to the IspH family. The cofactor is [4Fe-4S] cluster.

It catalyses the reaction isopentenyl diphosphate + 2 oxidized [2Fe-2S]-[ferredoxin] + H2O = (2E)-4-hydroxy-3-methylbut-2-enyl diphosphate + 2 reduced [2Fe-2S]-[ferredoxin] + 2 H(+). The catalysed reaction is dimethylallyl diphosphate + 2 oxidized [2Fe-2S]-[ferredoxin] + H2O = (2E)-4-hydroxy-3-methylbut-2-enyl diphosphate + 2 reduced [2Fe-2S]-[ferredoxin] + 2 H(+). It functions in the pathway isoprenoid biosynthesis; dimethylallyl diphosphate biosynthesis; dimethylallyl diphosphate from (2E)-4-hydroxy-3-methylbutenyl diphosphate: step 1/1. Its pathway is isoprenoid biosynthesis; isopentenyl diphosphate biosynthesis via DXP pathway; isopentenyl diphosphate from 1-deoxy-D-xylulose 5-phosphate: step 6/6. In terms of biological role, catalyzes the conversion of 1-hydroxy-2-methyl-2-(E)-butenyl 4-diphosphate (HMBPP) into a mixture of isopentenyl diphosphate (IPP) and dimethylallyl diphosphate (DMAPP). Acts in the terminal step of the DOXP/MEP pathway for isoprenoid precursor biosynthesis. This Cyanothece sp. (strain PCC 7425 / ATCC 29141) protein is 4-hydroxy-3-methylbut-2-enyl diphosphate reductase.